Reading from the N-terminus, the 320-residue chain is Mitochondrial thiamine pyrophosphate carrier (320 aa).

3 Solcar repeats span residues 13–106 (NTKF…LTEL), 116–202 (REFS…LKHL), and 214–309 (NENL…FCNV). Residues 19–39 (AVAGSVSGLVTRALISPFDVI) form a helical membrane-spanning segment. At Ser51 the chain carries Phosphoserine. Transmembrane regions (helical) follow at residues 87–107 (ILSI…TELV), 122–142 (FVCG…VDVL), 173–193 (VFYK…GLQF), and 220–240 (LLCG…LDLF). The short motif at 241–246 (KKRLQV) is the Substrate recognition element. The helical transmembrane segment at 293-313 (ALSTGFMFFSYEFFCNVFHCM) threads the bilayer.

The protein belongs to the mitochondrial carrier (TC 2.A.29) family. As to expression, expressed in all tissues examined except for placenta. Highest levels in colon, kidney, lung, testis, spleen, and brain.

The protein localises to the mitochondrion membrane. It catalyses the reaction thiamine phosphate(out) + thiamine diphosphate(in) = thiamine phosphate(in) + thiamine diphosphate(out). Mitochondrial transporter mediating uptake of thiamine diphosphate into mitochondria. It is not clear if the antiporter activity is affected by the membrane potential or by the proton electrochemical gradient. The sequence is that of Mitochondrial thiamine pyrophosphate carrier from Homo sapiens (Human).